Consider the following 153-residue polypeptide: Proline-rich membrane anchor 1 (153 aa).

An N-terminal signal peptide occupies residues 1–35; it reads MLLRDLVLRRGCCWSSLLLHCALHPLWGFVQVTHG. The Extracellular segment spans residues 36 to 92; that stretch reads EPQKSCSKVTDSCRHVCQCRPPPPLPPPPPPPPPPRLLSAPAPNSTSCPTEESWWSG. Residues 56 to 70 enclose the PRAD domain; the sequence is PPPPLPPPPPPPPPP. Pro residues predominate over residues 59-71; sequence PLPPPPPPPPPPR. The tract at residues 59–79 is disordered; it reads PLPPPPPPPPPPRLLSAPAPN. A glycan (N-linked (GlcNAc...) asparagine) is linked at Asn79. Residues 93–113 traverse the membrane as a helical segment; that stretch reads LVIIIAVCCASLVFLTVLVII. The Cytoplasmic portion of the chain corresponds to 114 to 153; it reads CYKAIKRKPLRKDENGTSVAEYPMSASQSNKGVDVNNAVV.

In terms of assembly, interacts with ACHE, probably through disulfide bonds.

The protein resides in the cell membrane. It localises to the cell junction. It is found in the synapse. In terms of biological role, required to anchor acetylcholinesterase (ACHE) to the basal lamina of the neuromuscular junction and to the membrane of neuronal synapses in brain. Also able to organize ACHE into tetramers. The protein is Proline-rich membrane anchor 1 (PRIMA1) of Homo sapiens (Human).